The following is a 509-amino-acid chain: Probable cation transporter HKT2;3 (509 aa).

The Cytoplasmic segment spans residues 1–32 (MPIRLHIFVNSARHAINSSAFICRFIAYHLSP). The next 2 membrane-spanning stretches (helical) occupy residues 33 to 53 (LLIHLSYFLIIDILGFVSLVV) and 96 to 116 (ILTLLMFLDSKMFLSFLGLVL). Topologically, residues 117-164 (ESSKQNKHDPENRRVSSVTVCKQSQLEEATPQTPSMNSIDIKKRCLKY) are cytoplasmic. 2 consecutive transmembrane segments (helical) span residues 165–185 (LVFVVLAYMIIILVTGSLLVF) and 237–257 (GLLLLLIGQILAGSTLFPVFL). Residues 258 to 296 (RLVIWALRGLRLAKAEEPDFMMNNSSAVGFSHLLPNLQT) are Cytoplasmic-facing. 2 helical membrane passes run 297 to 317 (IFLAVVEVAFVAMTVILFCCL) and 353 to 373 (CSLVAPAALVLFMVMMYTPSL). Residues 374–400 (TKLFSACQDHKRIGPESDDRTSKGKPF) lie on the Cytoplasmic side of the membrane. Helical transmembrane passes span 401 to 421 (LKMMAFSPLGFNTTVIMLVCI) and 474 to 494 (AYNFSGWWSEPGKLILVLAML). The Cytoplasmic portion of the chain corresponds to 495-509 (CGRLNSKDSTSARTR).

The protein belongs to the TrkH potassium transport family. HKT (TC 2.A.38.3) subfamily.

It is found in the membrane. Its function is as follows. Probable cation transporter. May be involved in regulation of potassium-sodium homeostasis. The polypeptide is Probable cation transporter HKT2;3 (Oryza sativa subsp. japonica (Rice)).